Reading from the N-terminus, the 85-residue chain is MAHKKAGGSTRNGRDSESKRLGVKMYGGQVIKAGNIIVRQRGTEFHPGFGVGMGKDHTLFAKIEGVVKFEVKGAFGRRYVSVVQA.

The segment at 1 to 21 (MAHKKAGGSTRNGRDSESKRL) is disordered.

The protein belongs to the bacterial ribosomal protein bL27 family.

The polypeptide is Large ribosomal subunit protein bL27 (Ectopseudomonas mendocina (strain ymp) (Pseudomonas mendocina)).